The chain runs to 702 residues: Dynein intermediate chain 2, ciliary (702 aa).

The span at 1-11 shows a compositional bias: low complexity; it reads MPVKSTKTKGG. Disordered regions lie at residues 1 to 64, 128 to 226, and 243 to 272; these read MPVK…IKPD, DEAR…FSST, and QEKA…ETQS. Composition is skewed to basic and acidic residues over residues 36–52 and 152–176; these read GKKD…HGGE and GEEK…RDEE. Residues 189-206 show a composition bias toward polar residues; sequence KLTNQFNFSERASQTYNN. Basic and acidic residues predominate over residues 243 to 261; the sequence is QEKAKEKKAAPSKKDDDKS. WD repeat units follow at residues 380-420, 429-472, 490-533, 537-577, 580-620, and 628-667; these read PTDS…ANPV, KHTD…LTYT, TQLT…QFLD, AHHM…GPMF, DLGS…YEPI, and KKKT…RKVP.

Belongs to the dynein intermediate chain family. Consists of at least two heavy chains (alpha and beta), three intermediate chains and several light chains.

It is found in the cytoplasm. Its subcellular location is the cytoskeleton. The protein localises to the cilium axoneme. Its function is as follows. Microtubule-binding protein that may be involved in dynein outer arm assembly on the axoneme. This is Dynein intermediate chain 2, ciliary from Heliocidaris crassispina (Sea urchin).